The sequence spans 218 residues: Small ribosomal subunit protein uS3c (218 aa).

The region spanning 47–117 (VRTHIRNSSN…KLKITLSEID (71 aa)) is the KH type-2 domain.

The protein belongs to the universal ribosomal protein uS3 family. Part of the 30S ribosomal subunit.

Its subcellular location is the plastid. It is found in the chloroplast. This chain is Small ribosomal subunit protein uS3c (rps3), found in Spirogyra maxima (Green alga).